The primary structure comprises 207 residues: MKRRPTSKAWLQEHVNDEFVKRAQRDGYRARAAYKLLEIDDKDQLIKPGMTIVDLGSAPGSWSQVAVQRLAGQGRVIALDILEMPPIPGVEFIQGDFREEEILLVLEKSLNGKPVDLVIADMAPNISGISDVDQARAAYLVELALEFSREWLKPGGNFLVKVFVGSGFDEIVMAMRDSFEKVVTRKPKASRDRSSEVYLLGLKRRNA.

S-adenosyl-L-methionine contacts are provided by Gly60, Trp62, Asp80, Asp96, and Asp121. Lys161 serves as the catalytic Proton acceptor.

This sequence belongs to the class I-like SAM-binding methyltransferase superfamily. RNA methyltransferase RlmE family.

The protein resides in the cytoplasm. It carries out the reaction uridine(2552) in 23S rRNA + S-adenosyl-L-methionine = 2'-O-methyluridine(2552) in 23S rRNA + S-adenosyl-L-homocysteine + H(+). Specifically methylates the uridine in position 2552 of 23S rRNA at the 2'-O position of the ribose in the fully assembled 50S ribosomal subunit. The chain is Ribosomal RNA large subunit methyltransferase E from Methylobacillus flagellatus (strain ATCC 51484 / DSM 6875 / VKM B-1610 / KT).